Reading from the N-terminus, the 143-residue chain is Auxin-responsive protein SAUR67 (143 aa).

This sequence belongs to the ARG7 family.

It is found in the cell membrane. In terms of biological role, may promote auxin-stimulated organ elongation, such as hypocotyls, stamen filaments and petals. In Arabidopsis thaliana (Mouse-ear cress), this protein is Auxin-responsive protein SAUR67.